The sequence spans 177 residues: Ribosome maturation factor RimM (177 aa).

A PRC barrel domain is found at 104 to 176; it reads DGEYYFFEIL…KIIVNMPEWL (73 aa).

Belongs to the RimM family. In terms of assembly, binds ribosomal protein uS19.

It is found in the cytoplasm. Functionally, an accessory protein needed during the final step in the assembly of 30S ribosomal subunit, possibly for assembly of the head region. Essential for efficient processing of 16S rRNA. May be needed both before and after RbfA during the maturation of 16S rRNA. It has affinity for free ribosomal 30S subunits but not for 70S ribosomes. The sequence is that of Ribosome maturation factor RimM from Fervidobacterium nodosum (strain ATCC 35602 / DSM 5306 / Rt17-B1).